A 291-amino-acid chain; its full sequence is Beta-lactamase CTX-M-4 (291 aa).

Positions 1 to 28 are cleaved as a signal peptide; that stretch reads MMTQSIRRSMLTVMATLPLLFSSATLHA. Serine 73 functions as the Acyl-ester intermediate in the catalytic mechanism. 237-239 lines the substrate pocket; that stretch reads KTG.

This sequence belongs to the class-A beta-lactamase family.

The catalysed reaction is a beta-lactam + H2O = a substituted beta-amino acid. Functionally, has cefotaxime-hydrolyzing activity. The polypeptide is Beta-lactamase CTX-M-4 (bla) (Salmonella typhimurium).